Here is a 1176-residue protein sequence, read N- to C-terminus: Growth-differentiation transition protein 5 (1176 aa).

A signal peptide spans 1 to 25 (MKNNFFKKTIILLIFLSIFILYSNA). The Extracellular portion of the chain corresponds to 26–913 (DEETITTPPG…DVPANENTLN (888 aa)). The helical transmembrane segment at 914–934 (LLTIVLPICSAVVVASSVMLG) threads the bilayer. At 935–1176 (RLFYKKKFKK…NVGYNVHEYF (242 aa)) the chain is on the cytoplasmic side. Composition is skewed to low complexity over residues 965–974 (SNIENKSESI) and 1053–1066 (PQIS…SIPS). 2 disordered regions span residues 965–985 (SNIE…EQKE) and 1050–1080 (VDTP…PPST). Over residues 1067–1078 (SSPPPPPLPLPP) the composition is skewed to pro residues.

Belongs to the GDT family.

Its subcellular location is the membrane. The chain is Growth-differentiation transition protein 5 (gdt5) from Dictyostelium discoideum (Social amoeba).